We begin with the raw amino-acid sequence, 303 residues long: Protoheme IX farnesyltransferase (303 aa).

9 consecutive transmembrane segments (helical) span residues glycine 17–alanine 37, leucine 42–isoleucine 62, alanine 91–valine 111, leucine 114–leucine 134, isoleucine 142–glycine 162, alanine 168–isoleucine 188, isoleucine 208–leucine 228, leucine 231–leucine 251, and phenylalanine 270–leucine 290.

Belongs to the UbiA prenyltransferase family. Protoheme IX farnesyltransferase subfamily.

It localises to the cell inner membrane. The catalysed reaction is heme b + (2E,6E)-farnesyl diphosphate + H2O = Fe(II)-heme o + diphosphate. It functions in the pathway porphyrin-containing compound metabolism; heme O biosynthesis; heme O from protoheme: step 1/1. Converts heme B (protoheme IX) to heme O by substitution of the vinyl group on carbon 2 of heme B porphyrin ring with a hydroxyethyl farnesyl side group. This is Protoheme IX farnesyltransferase from Alcanivorax borkumensis (strain ATCC 700651 / DSM 11573 / NCIMB 13689 / SK2).